Reading from the N-terminus, the 314-residue chain is tRNA pseudouridine synthase B (314 aa).

Histidine 43 contacts substrate. Residue aspartate 48 is the Nucleophile of the active site. Substrate is bound by residues tyrosine 76, tyrosine 179, and leucine 200.

This sequence belongs to the pseudouridine synthase TruB family. Type 1 subfamily.

It catalyses the reaction uridine(55) in tRNA = pseudouridine(55) in tRNA. Responsible for synthesis of pseudouridine from uracil-55 in the psi GC loop of transfer RNAs. This is tRNA pseudouridine synthase B from Salmonella typhi.